We begin with the raw amino-acid sequence, 1296 residues long: Aggregation substance (1296 aa).

The N-terminal stretch at 1–43 is a signal peptide; sequence MKQQTEVKKRFKMYKAKKHWVVAPILFIGVLGVVGLATDDVQA. Disordered regions lie at residues 48-188 and 1221-1245; these read TQPG…KPAE and HTPE…TPQA. Basic and acidic residues predominate over residues 89–99; the sequence is KVEEVASEKNG. 2 stretches are compositionally biased toward polar residues: residues 100–117 and 125–138; these read AEQS…QQPT and QEQP…TNEP. Over residues 160-178 the composition is skewed to basic and acidic residues; the sequence is KEFETPDVDKAVDEAKKDP. An LPXTG sorting signal motif is present at residues 1261-1265; the sequence is LPQTG. The residue at position 1264 (T1264) is a Pentaglycyl murein peptidoglycan amidated threonine. The propeptide at 1265 to 1296 is removed by sortase; the sequence is GEKQNVLLTVAGSLAAMLGLAGLGFKRRKETK.

The protein belongs to the antigen I/II family.

The protein localises to the secreted. It localises to the cell wall. Functionally, aggregation substance allows donor and recipient strains to form tight aggregates which allow the non-motile bacteria to maintain physical contact over a period of time sufficient to permit conjugative transfer of the sex pheromone plasmid from donor to recipient strains. This Enterococcus faecalis (strain ATCC 700802 / V583) protein is Aggregation substance (asa1).